The sequence spans 89 residues: Small ribosomal subunit protein uS15 (89 aa).

Residues 1 to 23 (MTLNTQEKQKLINTHQNHGTDTG) are disordered.

This sequence belongs to the universal ribosomal protein uS15 family. As to quaternary structure, part of the 30S ribosomal subunit. Forms a bridge to the 50S subunit in the 70S ribosome, contacting the 23S rRNA.

Its function is as follows. One of the primary rRNA binding proteins, it binds directly to 16S rRNA where it helps nucleate assembly of the platform of the 30S subunit by binding and bridging several RNA helices of the 16S rRNA. In terms of biological role, forms an intersubunit bridge (bridge B4) with the 23S rRNA of the 50S subunit in the ribosome. This chain is Small ribosomal subunit protein uS15, found in Prochlorococcus marinus (strain MIT 9211).